Reading from the N-terminus, the 480-residue chain is Sensor histidine kinase CusS (480 aa).

Over 1–15 (MVSKPFQRPFSLATR) the chain is Cytoplasmic. A helical membrane pass occupies residues 16–36 (LTFFISLATIAAFFAFAWIMI). The Periplasmic portion of the chain corresponds to 37 to 186 (HSVKVHFAEQ…LHYINDLMNK (150 aa)). A helical membrane pass occupies residues 187–207 (LIMTASVISILIVFIVLLAVH). Positions 208–260 (KGHAPIRSVSRQIQNITSKDLDVRLDPQTVPIELEQLVLSFNHMIERIEDVFT) constitute an HAMP domain. Residues 208-480 (KGHAPIRSVS…GTRFVITLPA (273 aa)) are Cytoplasmic-facing. In terms of domain architecture, Histidine kinase spans 268 to 480 (DIAHEIRTPI…GTRFVITLPA (213 aa)). Phosphohistidine; by autocatalysis is present on H271.

Post-translationally, autophosphorylated.

It is found in the cell inner membrane. The enzyme catalyses ATP + protein L-histidine = ADP + protein N-phospho-L-histidine.. Its function is as follows. Member of the two-component regulatory system CusS/CusR involved in response to copper and silver. Acts as a copper/silver ion sensor. Activates CusR by phosphorylation. The polypeptide is Sensor histidine kinase CusS (cusS) (Escherichia coli (strain K12)).